Consider the following 265-residue polypeptide: Putative hydro-lyase PST_2764 (265 aa).

Belongs to the D-glutamate cyclase family.

This Stutzerimonas stutzeri (strain A1501) (Pseudomonas stutzeri) protein is Putative hydro-lyase PST_2764.